The primary structure comprises 212 residues: Regulatory protein RecX (212 aa).

This sequence belongs to the RecX family.

It is found in the cytoplasm. Modulates RecA activity. The polypeptide is Regulatory protein RecX (Clostridium botulinum (strain Alaska E43 / Type E3)).